The primary structure comprises 170 residues: Orotate phosphoribosyltransferase (170 aa).

Residues Arg86, Lys87, Lys90, His92, and Glu111–Ser119 each bind 5-phospho-alpha-D-ribose 1-diphosphate. Residues Thr115 and Arg143 each coordinate orotate.

Belongs to the purine/pyrimidine phosphoribosyltransferase family. PyrE subfamily. As to quaternary structure, homodimer. It depends on Mg(2+) as a cofactor.

The catalysed reaction is orotidine 5'-phosphate + diphosphate = orotate + 5-phospho-alpha-D-ribose 1-diphosphate. It participates in pyrimidine metabolism; UMP biosynthesis via de novo pathway; UMP from orotate: step 1/2. Functionally, catalyzes the transfer of a ribosyl phosphate group from 5-phosphoribose 1-diphosphate to orotate, leading to the formation of orotidine monophosphate (OMP). The sequence is that of Orotate phosphoribosyltransferase from Methanoculleus marisnigri (strain ATCC 35101 / DSM 1498 / JR1).